A 412-amino-acid chain; its full sequence is Maintenance of mitochondrial morphology protein 1 (412 aa).

Residues 1-19 (MAQDVCPTRSEPSLSFLQG) are Lumenal-facing. Residues 20–40 (LILGQLSVVLLIAAFIKFFIF) form a helical membrane-spanning segment. Over 41–412 (GEAPSAEETA…GSLPGIDMPT (372 aa)) the chain is Cytoplasmic. Residues 121-337 (QPESLDWFNV…EPRFQEIELP (217 aa)) enclose the SMP-LTD domain. A compositionally biased stretch (basic and acidic residues) spans 372-384 (ARQELDTETDGLR). The interval 372-412 (ARQELDTETDGLRYRRRPVGDDTYSVSGSMPGSLPGIDMPT) is disordered.

Belongs to the MMM1 family. Homodimer. Component of the ER-mitochondria encounter structure (ERMES) or MDM complex, composed of MMM1, MDM10, MDM12 and MDM34. An MMM1 homodimer associates with one molecule of MDM12 on each side in a pairwise head-to-tail manner, and the SMP-LTD domains of MMM1 and MDM12 generate a continuous hydrophobic tunnel for phospholipid trafficking.

It localises to the endoplasmic reticulum membrane. Functionally, component of the ERMES/MDM complex, which serves as a molecular tether to connect the endoplasmic reticulum (ER) and mitochondria. Components of this complex are involved in the control of mitochondrial shape and protein biogenesis, and function in nonvesicular lipid trafficking between the ER and mitochondria. The MDM12-MMM1 subcomplex functions in the major beta-barrel assembly pathway that is responsible for biogenesis of all outer membrane beta-barrel proteins, and acts in a late step after the SAM complex. The MDM10-MDM12-MMM1 subcomplex further acts in the TOM40-specific pathway after the action of the MDM12-MMM1 complex. Essential for establishing and maintaining the structure of mitochondria and maintenance of mtDNA nucleoids. This is Maintenance of mitochondrial morphology protein 1 from Podospora anserina (strain S / ATCC MYA-4624 / DSM 980 / FGSC 10383) (Pleurage anserina).